We begin with the raw amino-acid sequence, 303 residues long: Putative S-adenosyl-L-methionine-dependent methyltransferase ML2020 (303 aa).

S-adenosyl-L-methionine is bound by residues Asp-130 and 159–160 (DL).

Belongs to the UPF0677 family.

Exhibits S-adenosyl-L-methionine-dependent methyltransferase activity. The sequence is that of Putative S-adenosyl-L-methionine-dependent methyltransferase ML2020 from Mycobacterium leprae (strain TN).